A 240-amino-acid chain; its full sequence is Short palate, lung and nasal epithelium carcinoma-associated protein 2B (240 aa).

Residues 1-19 (MVQLWKLVLLCGLLAGTSA) form the signal peptide. Cys163 and Cys206 are disulfide-bonded.

It belongs to the BPI/LBP/Plunc superfamily. Plunc family. Parotid glands.

It localises to the secreted. The chain is Short palate, lung and nasal epithelium carcinoma-associated protein 2B (SPLUNC2B) from Bos taurus (Bovine).